The following is a 277-amino-acid chain: Probable ketoamine kinase HMPREF0351_12196 (277 aa).

Residue Glu84–Ile86 participates in ATP binding. Asp186 (proton acceptor) is an active-site residue.

Belongs to the fructosamine kinase family.

The enzyme catalyses N(6)-(D-ribulosyl)-L-lysine + ATP = N(6)-(3-O-phospho-D-ribulosyl)-L-lysine + ADP + H(+). It catalyses the reaction N-(D-ribulosyl)-cadaverine + ATP = N-(3-O-phospho-D-ribulosyl)-cadaverine + ADP + H(+). It carries out the reaction N(6)-(D-erythrulosyl)-L-lysine + ATP = N(6)-(3-O-phospho-D-erythrulosyl)-L-lysine + ADP + H(+). The catalysed reaction is N-(D-erythrulosyl)-cadaverine + ATP = N-(3-O-phospho-D-erythrulosyl)-cadaverine + ADP + H(+). The enzyme catalyses N(6)-D-ribulosyl-L-lysyl-[protein] + ATP = N(6)-(3-O-phospho-D-ribulosyl)-L-lysyl-[protein] + ADP + H(+). It catalyses the reaction N(6)-(D-erythrulosyl)-L-lysyl-[protein] + ATP = N(6)-(3-O-phospho-D-erythrulosyl)-L-lysyl-[protein] + ADP + H(+). Its function is as follows. Ketoamine kinase that phosphorylates ketoamines, such as erythruloselysine, erythrulosecadaverine, ribuloselysine and ribulosecadaverine, on the third carbon of the sugar moiety to generate ketoamine 3-phosphate. Has higher activity on free lysine (erythruloselysine and ribuloselysine), than on ribuloselysine and erythruloselysine residues on glycated proteins. This chain is Probable ketoamine kinase HMPREF0351_12196, found in Enterococcus faecium (strain ATCC BAA-472 / TX0016 / DO).